Here is a 237-residue protein sequence, read N- to C-terminus: Large ribosomal subunit protein uL1 (237 aa).

This sequence belongs to the universal ribosomal protein uL1 family. As to quaternary structure, part of the 50S ribosomal subunit.

Binds directly to 23S rRNA. The L1 stalk is quite mobile in the ribosome, and is involved in E site tRNA release. Functionally, protein L1 is also a translational repressor protein, it controls the translation of the L11 operon by binding to its mRNA. The polypeptide is Large ribosomal subunit protein uL1 (Synechococcus sp. (strain ATCC 27144 / PCC 6301 / SAUG 1402/1) (Anacystis nidulans)).